Here is a 92-residue protein sequence, read N- to C-terminus: Small ribosomal subunit protein uS19c (92 aa).

It belongs to the universal ribosomal protein uS19 family.

It localises to the plastid. Its subcellular location is the chloroplast. Functionally, protein S19 forms a complex with S13 that binds strongly to the 16S ribosomal RNA. The polypeptide is Small ribosomal subunit protein uS19c (rps19) (Pinus thunbergii (Japanese black pine)).